Here is a 439-residue protein sequence, read N- to C-terminus: Acyl transferase 7 (439 aa).

Residues 1 to 25 are disordered; sequence MAAAAPDKAVERLSQKLVHPSSPTP. Catalysis depends on proton acceptor residues His-176 and Asp-383.

It belongs to the plant acyltransferase family.

In terms of biological role, involved in the incorporation of ferulate into the cell wall. May act as arabinoxylan feruloyl transferase. This is Acyl transferase 7 from Oryza sativa subsp. japonica (Rice).